We begin with the raw amino-acid sequence, 204 residues long: 8-oxoguanine DNA glycosylase/AP lyase (204 aa).

Active-site residues include lysine 128 and aspartate 146.

Belongs to the type-2 OGG1 family.

The catalysed reaction is 2'-deoxyribonucleotide-(2'-deoxyribose 5'-phosphate)-2'-deoxyribonucleotide-DNA = a 3'-end 2'-deoxyribonucleotide-(2,3-dehydro-2,3-deoxyribose 5'-phosphate)-DNA + a 5'-end 5'-phospho-2'-deoxyribonucleoside-DNA + H(+). Functionally, catalyzes the excision of an oxidatively damaged form of guanine (7,8-dihydro-8-oxoguanine = 8-oxoG) from DNA. Also cleaves the DNA backbone at apurinic/apyrimidinic sites (AP sites). This Sulfurisphaera tokodaii (strain DSM 16993 / JCM 10545 / NBRC 100140 / 7) (Sulfolobus tokodaii) protein is 8-oxoguanine DNA glycosylase/AP lyase.